The primary structure comprises 261 residues: Phosphate import ATP-binding protein PstB 4 (261 aa).

In terms of domain architecture, ABC transporter spans Ile8–Val256. Gly40–Ser47 lines the ATP pocket.

The protein belongs to the ABC transporter superfamily. Phosphate importer (TC 3.A.1.7) family. In terms of assembly, the complex is composed of two ATP-binding proteins (PstB), two transmembrane proteins (PstC and PstA) and a solute-binding protein (PstS).

The protein localises to the cell inner membrane. It catalyses the reaction phosphate(out) + ATP + H2O = ADP + 2 phosphate(in) + H(+). Its function is as follows. Part of the ABC transporter complex PstSACB involved in phosphate import. Responsible for energy coupling to the transport system. The protein is Phosphate import ATP-binding protein PstB 4 of Trichormus variabilis (strain ATCC 29413 / PCC 7937) (Anabaena variabilis).